The chain runs to 261 residues: 5'-nucleotidase SurE (261 aa).

Residues D8, D9, S39, and N94 each contribute to the a divalent metal cation site.

The protein belongs to the SurE nucleotidase family. It depends on a divalent metal cation as a cofactor.

The protein localises to the cytoplasm. It carries out the reaction a ribonucleoside 5'-phosphate + H2O = a ribonucleoside + phosphate. Nucleotidase that shows phosphatase activity on nucleoside 5'-monophosphates. This chain is 5'-nucleotidase SurE, found in Methanopyrus kandleri (strain AV19 / DSM 6324 / JCM 9639 / NBRC 100938).